We begin with the raw amino-acid sequence, 209 residues long: Ubiquitin-conjugating enzyme E2 S (209 aa).

Residues 14-160 (QTIRQVMREL…ARMMTEIHAQ (147 aa)) enclose the UBC core domain. Cys-98 acts as the Glycyl thioester intermediate in catalysis. The disordered stretch occupies residues 165–194 (GVGAASDAKDDDGPSTKKHAGLDKKLQDKK). Residues 171 to 194 (DAKDDDGPSTKKHAGLDKKLQDKK) show a composition bias toward basic and acidic residues.

It belongs to the ubiquitin-conjugating enzyme family.

The catalysed reaction is S-ubiquitinyl-[E1 ubiquitin-activating enzyme]-L-cysteine + [E2 ubiquitin-conjugating enzyme]-L-cysteine = [E1 ubiquitin-activating enzyme]-L-cysteine + S-ubiquitinyl-[E2 ubiquitin-conjugating enzyme]-L-cysteine.. It participates in protein modification; protein ubiquitination. In terms of biological role, catalyzes the covalent attachment of ubiquitin to other proteins. Acts as an essential factor of the anaphase promoting complex/cyclosome (APC/C), a cell cycle-regulated ubiquitin ligase that controls progression through mitosis. Acts by specifically elongating polyubiquitin chains initiated by the E2 enzyme vih/UbcH10 on APC/C substrates, enhancing the degradation of APC/C substrates by the proteasome and promoting mitotic exit. The chain is Ubiquitin-conjugating enzyme E2 S from Drosophila persimilis (Fruit fly).